We begin with the raw amino-acid sequence, 2997 residues long: Chromodomain-helicase-DNA-binding protein 7 (2997 aa).

The tract at residues 86–144 (PNRMMSNTPGNGLASPHSQYHTPPVPQVPHGGSGGGQMGVYPGMQNERHGQSFVDSSSM) is disordered. The span at 88 to 106 (RMMSNTPGNGLASPHSQYH) shows a compositional bias: polar residues. Position 148 is an omega-N-methylarginine (Arg148). Disordered stretches follow at residues 160 to 186 (YQQQQPQPQPPQPAPSGPPAQGHPQHM), 199 to 287 (SMQQ…AVRP), 375 to 419 (QMNT…GSAG), 498 to 816 (GQQH…KQKE), and 938 to 959 (REPETERVERPPADDWKKSESS). A compositionally biased stretch (pro residues) spans 166-177 (QPQPPQPAPSGP). Composition is skewed to polar residues over residues 199–224 (SMQQHGQPQQRMSQFSQGQEGLNQGN) and 238–255 (VPQQSPSMAPSLRHSVQQ). Arg286 carries the asymmetric dimethylarginine modification. The segment covering 375-390 (QMNTQTMHPSQPQGTY) has biased composition (polar residues). The span at 498 to 510 (GQQHPGQQPSFQQ) shows a compositional bias: low complexity. Over residues 607–620 (VAEDPSKGFGKDDF) the composition is skewed to basic and acidic residues. The segment covering 627–636 (QELNRNSLDG) has biased composition (polar residues). Ser637 carries the phosphoserine modification. 2 stretches are compositionally biased toward basic and acidic residues: residues 650 to 682 (KKDPKEPKEPKEKKEPKEPKTPKAPKIPKEPKE) and 717 to 729 (GKTEGSENSDLDK). A Phosphoserine modification is found at Ser725. The span at 746-758 (QKRRSSRQVKRKR) shows a compositional bias: basic residues. Over residues 759 to 769 (YTEDLEFKISD) the composition is skewed to basic and acidic residues. A compositionally biased stretch (polar residues) spans 782 to 794 (SPSNTSQSEQQES). 2 Chromo domains span residues 800–867 (PVVE…GQNK) and 882–947 (VEVD…RVER). One can recognise a Helicase ATP-binding domain in the interval 980-1154 (LFNWYNMRNC…FSLLHFLEPS (175 aa)). ATP is bound at residue 993 to 1000 (DEMGLGKT). A DEAH box motif is present at residues 1105-1108 (DEAH). The 171-residue stretch at 1294–1464 (LIDKLLPKLK…LSKKEIEDLL (171 aa)) folds into the Helicase C-terminal domain. Disordered regions lie at residues 1576–1600 (FSDLESDSEEKPCAKPRRPQDKSQG) and 1837–1863 (DMLADGGDGGEFDREDEDPEYKPTRTP). 2 positions are modified to phosphoserine: Ser1577 and Ser1581. The segment covering 1584–1596 (EEKPCAKPRRPQD) has biased composition (basic and acidic residues). The span at 1844–1855 (DGGEFDREDEDP) shows a compositional bias: acidic residues. Phosphoserine is present on Ser1874. Basic and acidic residues-rich tracts occupy residues 2170-2189 (QAEGKVEEPENPAAKEKCEG) and 2198-2207 (GSGKESKQEC). A disordered region spans residues 2170 to 2290 (QAEGKVEEPE…DETRDGFYME (121 aa)). 8 positions are modified to phosphoserine: Ser2231, Ser2233, Ser2237, Ser2251, Ser2272, Ser2275, Ser2356, and Ser2395. Over residues 2237–2251 (SEEDEEEKLEDDDKS) the composition is skewed to acidic residues. Residues 2401 to 2431 (RRRRRKIEIEAERAAKRRNLMEMVAQLRESQ) are a coiled coil. Phosphothreonine is present on Thr2472. A phosphoserine mark is found at Ser2533 and Ser2535. At Thr2551 the chain carries Phosphothreonine. 2 positions are modified to phosphoserine: Ser2559 and Ser2619. Over residues 2823-2832 (ATGNTTTASS) the composition is skewed to low complexity. Disordered regions lie at residues 2823-2872 (ATGN…SANG) and 2935-2997 (EEKA…ENDE). 2 stretches are compositionally biased toward basic and acidic residues: residues 2839–2849 (STSKGEEKGNE) and 2935–2951 (EEKAADKAEGGPFKDGE). Ser2956 and Ser2961 each carry phosphoserine. Residues 2970-2997 (LLEDEIAQGEELDSLDGGDEIENNENDE) are compositionally biased toward acidic residues.

This sequence belongs to the SNF2/RAD54 helicase family. As to quaternary structure, may interact with CTCF. Interacts with CHD8. Interacts with FAM124B. Found in a complex composed of AGO2, CHD7 and ARB2A. Interacts with TLK2. As to expression, widely expressed in fetal and adult tissues.

It is found in the nucleus. Its subcellular location is the nucleolus. The enzyme catalyses ATP + H2O = ADP + phosphate + H(+). In terms of biological role, ATP-dependent chromatin-remodeling factor, slides nucleosomes along DNA; nucleosome sliding requires ATP. Probable transcription regulator. May be involved in the in 45S precursor rRNA production. This Homo sapiens (Human) protein is Chromodomain-helicase-DNA-binding protein 7 (CHD7).